A 463-amino-acid polypeptide reads, in one-letter code: Glutamate--tRNA ligase (463 aa).

Positions 8-18 (PSPTGYLHIGG) match the 'HIGH' region motif. A 'KMSKS' region motif is present at residues 236–240 (RLSKR). Lys239 contributes to the ATP binding site.

Belongs to the class-I aminoacyl-tRNA synthetase family. Glutamate--tRNA ligase type 1 subfamily. In terms of assembly, monomer.

The protein localises to the cytoplasm. The enzyme catalyses tRNA(Glu) + L-glutamate + ATP = L-glutamyl-tRNA(Glu) + AMP + diphosphate. Functionally, catalyzes the attachment of glutamate to tRNA(Glu) in a two-step reaction: glutamate is first activated by ATP to form Glu-AMP and then transferred to the acceptor end of tRNA(Glu). The chain is Glutamate--tRNA ligase from Nitrosomonas europaea (strain ATCC 19718 / CIP 103999 / KCTC 2705 / NBRC 14298).